Consider the following 261-residue polypeptide: Ribosomal RNA small subunit methyltransferase J (261 aa).

S-adenosyl-L-methionine contacts are provided by residues 109–110, 125–126, and Asp179; these read RD and ER.

This sequence belongs to the methyltransferase superfamily. RsmJ family.

The protein localises to the cytoplasm. The catalysed reaction is guanosine(1516) in 16S rRNA + S-adenosyl-L-methionine = N(2)-methylguanosine(1516) in 16S rRNA + S-adenosyl-L-homocysteine + H(+). Its function is as follows. Specifically methylates the guanosine in position 1516 of 16S rRNA. The sequence is that of Ribosomal RNA small subunit methyltransferase J from Pseudomonas aeruginosa (strain UCBPP-PA14).